We begin with the raw amino-acid sequence, 180 residues long: MSTLRIFDDANPDAPLVATSDAARMAAELKSIGVRFERWESPVAIAADASPEEILEAYRPYLDRLMGETGAGSADVIKMTPDHPQAGTLREKFLNEHIHTEDEVRFFVRGSGHFVMHLDGKVYDAYCTEGDLISVPANTRHWFDAGSTPDFIALRIFTDTSGWVAHFTGDQISARFPVAA.

Residues histidine 97, histidine 99, glutamate 103, and histidine 141 each contribute to the Fe(2+) site. 4 residues coordinate Ni(2+): histidine 97, histidine 99, glutamate 103, and histidine 141.

The protein belongs to the acireductone dioxygenase (ARD) family. Monomer. The cofactor is Fe(2+). Ni(2+) serves as cofactor.

It carries out the reaction 1,2-dihydroxy-5-(methylsulfanyl)pent-1-en-3-one + O2 = 3-(methylsulfanyl)propanoate + CO + formate + 2 H(+). It catalyses the reaction 1,2-dihydroxy-5-(methylsulfanyl)pent-1-en-3-one + O2 = 4-methylsulfanyl-2-oxobutanoate + formate + 2 H(+). The protein operates within amino-acid biosynthesis; L-methionine biosynthesis via salvage pathway; L-methionine from S-methyl-5-thio-alpha-D-ribose 1-phosphate: step 5/6. Functionally, catalyzes 2 different reactions between oxygen and the acireductone 1,2-dihydroxy-3-keto-5-methylthiopentene (DHK-MTPene) depending upon the metal bound in the active site. Fe-containing acireductone dioxygenase (Fe-ARD) produces formate and 2-keto-4-methylthiobutyrate (KMTB), the alpha-ketoacid precursor of methionine in the methionine recycle pathway. Ni-containing acireductone dioxygenase (Ni-ARD) produces methylthiopropionate, carbon monoxide and formate, and does not lie on the methionine recycle pathway. This chain is Acireductone dioxygenase, found in Acidiphilium cryptum (strain JF-5).